We begin with the raw amino-acid sequence, 348 residues long: Aspartate carbamoyltransferase catalytic subunit (348 aa).

Positions 59 and 60 each coordinate carbamoyl phosphate. An L-aspartate-binding site is contributed by Lys-87. Residues Arg-109, His-142, and Gln-145 each contribute to the carbamoyl phosphate site. Arg-182 and Arg-253 together coordinate L-aspartate. Residues Gly-294 and Pro-295 each coordinate carbamoyl phosphate.

This sequence belongs to the aspartate/ornithine carbamoyltransferase superfamily. ATCase family. As to quaternary structure, heterododecamer (2C3:3R2) of six catalytic PyrB chains organized as two trimers (C3), and six regulatory PyrI chains organized as three dimers (R2).

It carries out the reaction carbamoyl phosphate + L-aspartate = N-carbamoyl-L-aspartate + phosphate + H(+). It participates in pyrimidine metabolism; UMP biosynthesis via de novo pathway; (S)-dihydroorotate from bicarbonate: step 2/3. Its function is as follows. Catalyzes the condensation of carbamoyl phosphate and aspartate to form carbamoyl aspartate and inorganic phosphate, the committed step in the de novo pyrimidine nucleotide biosynthesis pathway. The sequence is that of Aspartate carbamoyltransferase catalytic subunit from Prochlorococcus marinus (strain MIT 9313).